The following is a 103-amino-acid chain: Large ribosomal subunit protein uL24 (103 aa).

It belongs to the universal ribosomal protein uL24 family. In terms of assembly, part of the 50S ribosomal subunit.

Its function is as follows. One of two assembly initiator proteins, it binds directly to the 5'-end of the 23S rRNA, where it nucleates assembly of the 50S subunit. In terms of biological role, one of the proteins that surrounds the polypeptide exit tunnel on the outside of the subunit. The chain is Large ribosomal subunit protein uL24 from Sinorhizobium medicae (strain WSM419) (Ensifer medicae).